The chain runs to 335 residues: Methylthioribose-1-phosphate isomerase (335 aa).

Substrate is bound by residues 47-49, Arg-81, and Gln-184; that span reads RGA. Residue Asp-225 is the Proton donor of the active site. 235-236 serves as a coordination point for substrate; it reads NK.

It belongs to the eIF-2B alpha/beta/delta subunits family. MtnA subfamily.

It catalyses the reaction 5-(methylsulfanyl)-alpha-D-ribose 1-phosphate = 5-(methylsulfanyl)-D-ribulose 1-phosphate. The protein operates within amino-acid biosynthesis; L-methionine biosynthesis via salvage pathway; L-methionine from S-methyl-5-thio-alpha-D-ribose 1-phosphate: step 1/6. In terms of biological role, catalyzes the interconversion of methylthioribose-1-phosphate (MTR-1-P) into methylthioribulose-1-phosphate (MTRu-1-P). The protein is Methylthioribose-1-phosphate isomerase of Synechococcus sp. (strain CC9902).